The sequence spans 43 residues: Iota-conotoxin-like Fi11.6 (43 aa).

Intrachain disulfides connect cysteine 2–cysteine 16, cysteine 9–cysteine 19, cysteine 15–cysteine 24, and cysteine 18–cysteine 35. The residue at position 8 (proline 8) is a 4-hydroxyproline. The residue at position 26 (proline 26) is a 4-hydroxyproline. Residue tryptophan 30 is modified to 6'-bromotryptophan. D-phenylalanine is present on phenylalanine 41.

It belongs to the conotoxin I1 superfamily. In terms of tissue distribution, expressed by the venom duct.

It is found in the secreted. In terms of biological role, iota-conotoxins bind to voltage-gated sodium channels (Nav) and act as agonists by shifting the voltage-dependence of activation to more hyperpolarized levels. Produces general excitatory symptoms. In Conus figulinus (Fig cone), this protein is Iota-conotoxin-like Fi11.6.